Reading from the N-terminus, the 409-residue chain is Probable peptidoglycan glycosyltransferase FtsW (409 aa).

9 helical membrane passes run 42 to 62 (LFTL…SASL), 72 to 92 (PFHF…VMLA), 108 to 128 (LLLL…EVNG), 135 to 155 (VGPI…IYMA), 178 to 198 (LLFI…VVVL), 213 to 233 (LWQF…LIIV), 303 to 323 (FLGV…ALII), 337 to 357 (YLAY…IGVA), and 368 to 388 (LPLV…VGLL).

This sequence belongs to the SEDS family. FtsW subfamily.

The protein localises to the cell inner membrane. The catalysed reaction is [GlcNAc-(1-&gt;4)-Mur2Ac(oyl-L-Ala-gamma-D-Glu-L-Lys-D-Ala-D-Ala)](n)-di-trans,octa-cis-undecaprenyl diphosphate + beta-D-GlcNAc-(1-&gt;4)-Mur2Ac(oyl-L-Ala-gamma-D-Glu-L-Lys-D-Ala-D-Ala)-di-trans,octa-cis-undecaprenyl diphosphate = [GlcNAc-(1-&gt;4)-Mur2Ac(oyl-L-Ala-gamma-D-Glu-L-Lys-D-Ala-D-Ala)](n+1)-di-trans,octa-cis-undecaprenyl diphosphate + di-trans,octa-cis-undecaprenyl diphosphate + H(+). It functions in the pathway cell wall biogenesis; peptidoglycan biosynthesis. Functionally, peptidoglycan polymerase that is essential for cell division. The sequence is that of Probable peptidoglycan glycosyltransferase FtsW from Idiomarina loihiensis (strain ATCC BAA-735 / DSM 15497 / L2-TR).